Reading from the N-terminus, the 304-residue chain is MKKKLLSVAAVASVFTLAACGSNDEAVINYKGGEVNKADVQDEAYQKAGAQIAFQQTMNKLLEKEYGKKVTDKEVEAEVKKTKDQFPDKEQFNTTLQTAGIKNEKEFEKVLRTQMLLKEAKSAKSKVTDKEIEDRFNQEKVEVKASHILVEKESEAKAIKKQLDEGGDFAKIAKAKSTDTGSATKGGDLGYFTKGKMVEEFENYAFKDGVEGKISDPIKTQFGYHIIKVTDRKEKKDFTLEKESDRIKKALAEEKSAQVNPNDIYRSLMKKYDVKVENKDFKDAFDLDKQEQQQMQQQMQQQQQ.

An N-terminal signal peptide occupies residues 1–19 (MKKKLLSVAAVASVFTLAA). Cys-20 carries N-palmitoyl cysteine lipidation. Cys-20 is lipidated: S-diacylglycerol cysteine. One can recognise a PpiC domain in the interval 140–231 (KVEVKASHIL…FGYHIIKVTD (92 aa)). Residues 285 to 304 (FDLDKQEQQQMQQQMQQQQQ) are disordered. The span at 292 to 304 (QQQMQQQMQQQQQ) shows a compositional bias: low complexity.

It belongs to the PrsA family.

It localises to the cell membrane. The catalysed reaction is [protein]-peptidylproline (omega=180) = [protein]-peptidylproline (omega=0). Functionally, plays a major role in protein secretion by helping the post-translocational extracellular folding of several secreted proteins. This chain is Foldase protein PrsA, found in Exiguobacterium sibiricum (strain DSM 17290 / CCUG 55495 / CIP 109462 / JCM 13490 / 255-15).